A 179-amino-acid polypeptide reads, in one-letter code: ATP synthase subunit delta (179 aa).

Belongs to the ATPase delta chain family. In terms of assembly, F-type ATPases have 2 components, F(1) - the catalytic core - and F(0) - the membrane proton channel. F(1) has five subunits: alpha(3), beta(3), gamma(1), delta(1), epsilon(1). F(0) has three main subunits: a(1), b(2) and c(10-14). The alpha and beta chains form an alternating ring which encloses part of the gamma chain. F(1) is attached to F(0) by a central stalk formed by the gamma and epsilon chains, while a peripheral stalk is formed by the delta and b chains.

It is found in the cell membrane. F(1)F(0) ATP synthase produces ATP from ADP in the presence of a proton or sodium gradient. F-type ATPases consist of two structural domains, F(1) containing the extramembraneous catalytic core and F(0) containing the membrane proton channel, linked together by a central stalk and a peripheral stalk. During catalysis, ATP synthesis in the catalytic domain of F(1) is coupled via a rotary mechanism of the central stalk subunits to proton translocation. In terms of biological role, this protein is part of the stalk that links CF(0) to CF(1). It either transmits conformational changes from CF(0) to CF(1) or is implicated in proton conduction. The chain is ATP synthase subunit delta from Clostridium perfringens (strain ATCC 13124 / DSM 756 / JCM 1290 / NCIMB 6125 / NCTC 8237 / Type A).